Reading from the N-terminus, the 202-residue chain is Probable ATP-dependent Clp protease proteolytic subunit 3 (202 aa).

Serine 101 serves as the catalytic Nucleophile. The active site involves histidine 126.

It belongs to the peptidase S14 family. In terms of assembly, fourteen ClpP subunits assemble into 2 heptameric rings which stack back to back to give a disk-like structure with a central cavity, resembling the structure of eukaryotic proteasomes.

The protein localises to the cytoplasm. The catalysed reaction is Hydrolysis of proteins to small peptides in the presence of ATP and magnesium. alpha-casein is the usual test substrate. In the absence of ATP, only oligopeptides shorter than five residues are hydrolyzed (such as succinyl-Leu-Tyr-|-NHMec, and Leu-Tyr-Leu-|-Tyr-Trp, in which cleavage of the -Tyr-|-Leu- and -Tyr-|-Trp bonds also occurs).. Its function is as follows. Cleaves peptides in various proteins in a process that requires ATP hydrolysis. Has a chymotrypsin-like activity. Plays a major role in the degradation of misfolded proteins. The sequence is that of Probable ATP-dependent Clp protease proteolytic subunit 3 from Synechocystis sp. (strain ATCC 27184 / PCC 6803 / Kazusa).